The sequence spans 495 residues: Putative FAD-containing monooxygenase MymA (495 aa).

FAD contacts are provided by residues Ser-15, Glu-36, Trp-45, 56–57, and Val-104; that span reads DS.

It belongs to the FAD-binding monooxygenase family. FAD serves as cofactor.

In terms of biological role, required for maintaining the appropriate mycolic acid composition and permeability of the envelope on its exposure to acidic pH. In Mycobacterium tuberculosis (strain CDC 1551 / Oshkosh), this protein is Putative FAD-containing monooxygenase MymA (mymA).